The primary structure comprises 541 residues: Effector protein hopAB1 (541 aa).

Disordered stretches follow at residues 1 to 94, 168 to 222, and 317 to 338; these read MPGI…EAQQ, QRAL…RHPQ, and RQTT…SGRR. Over residues 18-31 the composition is skewed to basic and acidic residues; the sequence is TDGEPVTEREHDSS. Residues 183-196 show a composition bias toward low complexity; that stretch reads SSSGSSQRSLIGRS.

Belongs to the HopAB family.

It localises to the secreted. Effector protein that plays different roles depending on the species and plant cultivars that interact with the pathogen. Acts as a virulence determinant by enhancing the development of disease symptoms and bacterial growth. Acts as an avirulence factor by eliciting hypersensitive response (HR) and plant resistance. This chain is Effector protein hopAB1 (hopAB1), found in Pseudomonas savastanoi (Pseudomonas syringae pv. savastanoi).